Reading from the N-terminus, the 142-residue chain is Large ribosomal subunit protein uL13 (142 aa).

It belongs to the universal ribosomal protein uL13 family. Part of the 50S ribosomal subunit.

Its function is as follows. This protein is one of the early assembly proteins of the 50S ribosomal subunit, although it is not seen to bind rRNA by itself. It is important during the early stages of 50S assembly. The chain is Large ribosomal subunit protein uL13 from Azotobacter vinelandii (strain DJ / ATCC BAA-1303).